The chain runs to 518 residues: Bifunctional purine biosynthesis protein PurH (518 aa).

The MGS-like domain occupies 1 to 144 (MSKRALISVS…KNHASVTVVC (144 aa)).

It belongs to the PurH family.

It carries out the reaction (6R)-10-formyltetrahydrofolate + 5-amino-1-(5-phospho-beta-D-ribosyl)imidazole-4-carboxamide = 5-formamido-1-(5-phospho-D-ribosyl)imidazole-4-carboxamide + (6S)-5,6,7,8-tetrahydrofolate. The enzyme catalyses IMP + H2O = 5-formamido-1-(5-phospho-D-ribosyl)imidazole-4-carboxamide. Its pathway is purine metabolism; IMP biosynthesis via de novo pathway; 5-formamido-1-(5-phospho-D-ribosyl)imidazole-4-carboxamide from 5-amino-1-(5-phospho-D-ribosyl)imidazole-4-carboxamide (10-formyl THF route): step 1/1. It functions in the pathway purine metabolism; IMP biosynthesis via de novo pathway; IMP from 5-formamido-1-(5-phospho-D-ribosyl)imidazole-4-carboxamide: step 1/1. The chain is Bifunctional purine biosynthesis protein PurH from Lactococcus lactis subsp. lactis (strain IL1403) (Streptococcus lactis).